The following is a 127-amino-acid chain: Translation initiation factor 5A (127 aa).

Lysine 35 is modified (hypusine).

This sequence belongs to the eIF-5A family.

Its subcellular location is the cytoplasm. Functions by promoting the formation of the first peptide bond. This Methanococcoides burtonii (strain DSM 6242 / NBRC 107633 / OCM 468 / ACE-M) protein is Translation initiation factor 5A.